Reading from the N-terminus, the 176-residue chain is Ribosome maturation factor RimP (176 aa).

It belongs to the RimP family.

Its subcellular location is the cytoplasm. In terms of biological role, required for maturation of 30S ribosomal subunits. This is Ribosome maturation factor RimP from Chlorobium limicola (strain DSM 245 / NBRC 103803 / 6330).